The primary structure comprises 565 residues: Granule-bound starch synthase 1b, chloroplastic/amyloplastic (565 aa).

The transit peptide at 1 to 34 (VFLSMRNKTQLAKRRATNYETHRNSSRTSSPIVC) directs the protein to the chloroplast. K52 contacts ADP-alpha-D-glucose.

Belongs to the glycosyltransferase 1 family. Bacterial/plant glycogen synthase subfamily.

Its subcellular location is the plastid. It localises to the chloroplast. It is found in the amyloplast. The enzyme catalyses an NDP-alpha-D-glucose + [(1-&gt;4)-alpha-D-glucosyl](n) = [(1-&gt;4)-alpha-D-glucosyl](n+1) + a ribonucleoside 5'-diphosphate + H(+). The protein operates within glycan biosynthesis; starch biosynthesis. Involved in the synthesis of amylose in endosperm. The sequence is that of Granule-bound starch synthase 1b, chloroplastic/amyloplastic from Hordeum vulgare (Barley).